Here is a 1323-residue protein sequence, read N- to C-terminus: Clustered mitochondria protein homolog (1323 aa).

A TPR 1 repeat occupies 103–141 (KEKPYNLAAIYDHLNKFREVIGLHFLDKYSSEVGVLSGV). Positions 149–186 (LQDVKETEPETQDDKDKETDETKSTKEDSNQTEEKKSE) are disordered. A compositionally biased stretch (basic and acidic residues) spans 150 to 186 (QDVKETEPETQDDKDKETDETKSTKEDSNQTEEKKSE). The Clu domain occupies 351–608 (FANQPDASRS…RATPLDIEFI (258 aa)). One copy of the TPR 2 repeat lies at 530 to 563 (CYGLSTDGSKIFSDSSFENVLKPIAEAFHLKPHP). The segment covering 764–801 (NEEEISKRKEESEKKATEGKDQDKEEEKANDNEKNKED) has biased composition (basic and acidic residues). The disordered stretch occupies residues 764-808 (NEEEISKRKEESEKKATEGKDQDKEEEKANDNEKNKEDDKEEVSN). TPR repeat units lie at residues 1042–1076 (LSVYEQIYGRVHPETSKFYGLLSQYYAELGLKSEA), 1099–1132 (ITAYINSAFFESTNDDYINALNLYNKAINDWTLV), 1141–1174 (VNTYANLAELLSEHKLFQQANKLFEKAISISTKL), and 1183–1216 (GMLRYRYGGTLLGGGDFKSALDQFKSANDIFTKF). The tract at residues 1250 to 1323 (KALAQQASAS…KKSNNKKSKK (74 aa)) is disordered. Positions 1308–1323 (PKKQLKKKSNNKKSKK) are enriched in basic residues.

The protein belongs to the CLU family. As to quaternary structure, may associate with the eukaryotic translation initiation factor 3 (eIF-3) complex.

Its subcellular location is the cytoplasm. MRNA-binding protein involved in proper cytoplasmic distribution of mitochondria. The chain is Clustered mitochondria protein homolog from Debaryomyces hansenii (strain ATCC 36239 / CBS 767 / BCRC 21394 / JCM 1990 / NBRC 0083 / IGC 2968) (Yeast).